A 117-amino-acid polypeptide reads, in one-letter code: Putative membrane protein insertion efficiency factor (117 aa).

This sequence belongs to the UPF0161 family.

The protein resides in the cell inner membrane. In terms of biological role, could be involved in insertion of integral membrane proteins into the membrane. This Bartonella bacilliformis (strain ATCC 35685 / KC583 / Herrer 020/F12,63) protein is Putative membrane protein insertion efficiency factor.